The primary structure comprises 196 residues: Pyridoxal 5'-phosphate synthase subunit PdxT (196 aa).

Residue Gly52–Ser54 coordinates L-glutamine. The Nucleophile role is filled by Cys84. L-glutamine contacts are provided by residues Arg113 and Ile141–Arg142. Catalysis depends on charge relay system residues His178 and Glu180.

Belongs to the glutaminase PdxT/SNO family. In terms of assembly, in the presence of PdxS, forms a dodecamer of heterodimers. Only shows activity in the heterodimer.

It catalyses the reaction aldehydo-D-ribose 5-phosphate + D-glyceraldehyde 3-phosphate + L-glutamine = pyridoxal 5'-phosphate + L-glutamate + phosphate + 3 H2O + H(+). The enzyme catalyses L-glutamine + H2O = L-glutamate + NH4(+). Its pathway is cofactor biosynthesis; pyridoxal 5'-phosphate biosynthesis. In terms of biological role, catalyzes the hydrolysis of glutamine to glutamate and ammonia as part of the biosynthesis of pyridoxal 5'-phosphate. The resulting ammonia molecule is channeled to the active site of PdxS. This is Pyridoxal 5'-phosphate synthase subunit PdxT from Pyrococcus abyssi (strain GE5 / Orsay).